The primary structure comprises 157 residues: Large ribosomal subunit protein uL11 (157 aa).

It belongs to the universal ribosomal protein uL11 family. In terms of assembly, part of the ribosomal stalk of the 50S ribosomal subunit. Interacts with L10 and the large rRNA to form the base of the stalk. L10 forms an elongated spine to which L12 dimers bind in a sequential fashion forming a multimeric L10(L12)X complex.

In terms of biological role, forms part of the ribosomal stalk which helps the ribosome interact with GTP-bound translation factors. The protein is Large ribosomal subunit protein uL11 of Archaeoglobus fulgidus (strain ATCC 49558 / DSM 4304 / JCM 9628 / NBRC 100126 / VC-16).